We begin with the raw amino-acid sequence, 141 residues long: Large ribosomal subunit protein uL11 (141 aa).

The protein belongs to the universal ribosomal protein uL11 family. In terms of assembly, part of the ribosomal stalk of the 50S ribosomal subunit. Interacts with L10 and the large rRNA to form the base of the stalk. L10 forms an elongated spine to which L12 dimers bind in a sequential fashion forming a multimeric L10(L12)X complex. One or more lysine residues are methylated.

Its function is as follows. Forms part of the ribosomal stalk which helps the ribosome interact with GTP-bound translation factors. This Tropheryma whipplei (strain TW08/27) (Whipple's bacillus) protein is Large ribosomal subunit protein uL11.